Consider the following 1580-residue polypeptide: Dynamin-binding protein (1580 aa).

Met-1 carries the N-acetylmethionine modification. 3 SH3 domains span residues 2–61, 66–127, and 146–205; these read EPGS…IVTI, EGER…ELCL, and YSLG…LLGP. 4 disordered regions span residues 211–245, 304–446, 500–546, and 589–688; these read ESVNSRSGDDSAVNGEVDVPPEEAESGGDEDDQQS, NRTE…LVPL, YAQK…DSLD, and RGSS…AQTF. Positions 229 to 243 are enriched in acidic residues; the sequence is VPPEEAESGGDEDDQ. Residues 244 to 303 form the SH3 4 domain; that stretch reads QSGTYGIALYRFQALETNELDFEVGDRIQILGTLEDGWLEGCLKGKTGVFPHRFVKLCPS. Polar residues-rich tracts occupy residues 422 to 439 and 502 to 513; these read QKSQHYLTAGGSHQTSDP and QKHQTSTENTAS. A compositionally biased stretch (basic and acidic residues) spans 516–527; the sequence is DPPERPERRPGL. Pro residues predominate over residues 608–617; it reads RPPPPRPRTP. The span at 671–682 shows a compositional bias: basic and acidic residues; it reads APEKEDSEHMEK. Ser-683 bears the Phosphoserine mark. A coiled-coil region spans residues 694-755; the sequence is LARIRDVEQD…LELQQLRDMT (62 aa). The DH domain occupies 783–970; that stretch reads KRAKVVAELL…KEINVNINEY (188 aa). The 210-residue stretch at 1011-1220 folds into the BAR domain; that stretch reads LKHLTGFAPQ…LKATDREGNL (210 aa). Residues 1288–1351 enclose the SH3 5 domain; it reads PPEKLFHVQR…YSSFLKPYNP (64 aa). Residues 1356 to 1365 are compositionally biased toward low complexity; it reads SDASVASHSS. Disordered stretches follow at residues 1356 to 1384 and 1426 to 1514; these read SDASVASHSSTESEHSGSSPGCHRQNSHS and TGHP…GSSE. Positions 1426–1440 are enriched in polar residues; that stretch reads TGHPETGPSTCSSDP. Positions 1516-1579 constitute an SH3 6 domain; the sequence is EGNQVYFAIY…PSNYIRKTEY (64 aa).

As to quaternary structure, binds DNM1 via its N-terminal SH3 domains. The C-terminal SH3 domain binds a complex containing actin, tubulin, Hsp70 and actin-regulatory proteins, such as ENAH, EVL, WIRE, CR16, WAVE1 and NAP1L1. Interacts with FASLG. Interacts (via SH3 domain 6) with WASL. Interacts (via SH3 domain 6) interacts with ENAH. Interacts (via C-terminal domain) with TJP1; required for the apical cell-cell junction localization of DNMBP.

The protein resides in the cytoplasm. It localises to the golgi apparatus. It is found in the golgi stack. Its subcellular location is the cytoskeleton. The protein localises to the synapse. The protein resides in the cell junction. In terms of biological role, plays a critical role as a guanine nucleotide exchange factor (GEF) for CDC42 in several intracellular processes associated with the actin and microtubule cytoskeleton. Regulates the structure of apical junctions in epithelial cells. Participates in the normal lumenogenesis of epithelial cell cysts by regulating spindle orientation. Plays a role in ciliogenesis. May play a role in membrane trafficking between the cell surface and the Golgi. In Mus musculus (Mouse), this protein is Dynamin-binding protein.